A 247-amino-acid polypeptide reads, in one-letter code: MDRIKCTVAYDGMHFCGYQIQPQHRTVQQEIEKALQKLHKGELVRVQASGRTDSTVHAKGQVIHFDTPLSLEEWQWSNALNTMLPDDIVITQVEKKTEEFHARYGVERKEYRYRVLVSKTADVFRRNYVYQYPYPLEVNSIRKAIPYFIGTHDFTSFCSAKTDKKDKVRTIYEIELIEQDDELIFRFVGNGFLYNMVRIIVGTLLNVGQGKLDPDSIPEILAKQNRQFAGKMAPGHGLYLWQVNYNN.

Aspartate 53 (nucleophile) is an active-site residue. Tyrosine 111 serves as a coordination point for substrate.

This sequence belongs to the tRNA pseudouridine synthase TruA family. In terms of assembly, homodimer.

It carries out the reaction uridine(38/39/40) in tRNA = pseudouridine(38/39/40) in tRNA. Formation of pseudouridine at positions 38, 39 and 40 in the anticodon stem and loop of transfer RNAs. This chain is tRNA pseudouridine synthase A 1, found in Bacillus cereus (strain ZK / E33L).